We begin with the raw amino-acid sequence, 843 residues long: Tetratricopeptide repeat protein 7B (843 aa).

The TPR 1 repeat unit spans residues 97 to 131 (QESNLIMAKLNYVEGDYKEALNIYARVGLDDLPLT). A phosphoserine mark is found at serine 160 and serine 202. 6 TPR repeats span residues 219-252 (ETGLQRAHVLYFKNGNLTRGVGRFRELLRAVETR), 363-396 (SVVYDLLTIALGRRGQYEMLSECLERAMKFAFEE), 397-430 (FHLWYQFALSLMAAGKSARAVKVLKECIRLKPDD), 479-514 (TYSLQATDASLRGMQEVLQRKALLAFQRAHSLSPTD), 516-548 (QAAFYLALQLAISRQIPEALGYVRQALQLQGDD), and 549-582 (ANSLHLLALLLSAQKHYHDALNIIDMALSEYPEN). Residues serine 625, serine 629, serine 630, serine 673, serine 677, serine 678, and serine 681 each carry the phosphoserine modification. TPR repeat units lie at residues 696-729 (AQIWLHAAEVYIGIGKPAEATACTQEAANLFPMS), 730-763 (HNVLYMRGQIAELRGSMDEARRWYEEALAISPTH), 765-797 (KSMQRLALILHQLGRYSLAEKILRDAVQVNSTA), and 798-831 (HEVWNGLGEVLQAQGNDAAATECFLTALELEASS).

In terms of assembly, component of a phosphatidylinositol 4-kinase (PI4K) complex, composed of PI4KA, EFR3 (EFR3A or EFR3B), TTC7 (TTC7A or TTC7B) and HYCC (HYCC1 or HYCC2). Interacts with PI4KA, interaction is direct. Interacts with EFR3 (EFR3A or EFR3B), interaction is direct. Interacts with HYCC (HYCC1 or HYCC2), interaction is direct. Association with the PI4K complex is strongly reduced by TMEM150A.

It is found in the cytoplasm. Its subcellular location is the cytosol. The protein resides in the cell membrane. Functionally, component of a complex required to localize phosphatidylinositol 4-kinase (PI4K) to the plasma membrane. The complex acts as a regulator of phosphatidylinositol 4-phosphate (PtdIns(4)P) synthesis. In the complex, plays a central role in bridging PI4KA to EFR3B and HYCC1, via direct interactions. The chain is Tetratricopeptide repeat protein 7B (TTC7B) from Homo sapiens (Human).